We begin with the raw amino-acid sequence, 274 residues long: Rhamnulose-1-phosphate aldolase (274 aa).

Glu-117 is a catalytic residue. The Zn(2+) site is built by His-141, His-143, and His-212.

Belongs to the aldolase class II family. RhaD subfamily. In terms of assembly, homotetramer. Requires Zn(2+) as cofactor.

It is found in the cytoplasm. It carries out the reaction L-rhamnulose 1-phosphate = (S)-lactaldehyde + dihydroxyacetone phosphate. It functions in the pathway carbohydrate degradation; L-rhamnose degradation; glycerone phosphate from L-rhamnose: step 3/3. In terms of biological role, catalyzes the reversible cleavage of L-rhamnulose-1-phosphate to dihydroxyacetone phosphate (DHAP) and L-lactaldehyde. The protein is Rhamnulose-1-phosphate aldolase of Yersinia pseudotuberculosis serotype I (strain IP32953).